The sequence spans 339 residues: Heat-inducible transcription repressor HrcA (339 aa).

Belongs to the HrcA family.

Its function is as follows. Negative regulator of class I heat shock genes (grpE-dnaK-dnaJ and groELS operons). Prevents heat-shock induction of these operons. This Parafrankia sp. (strain EAN1pec) protein is Heat-inducible transcription repressor HrcA.